The primary structure comprises 1171 residues: DNA-directed RNA polymerase subunit beta (1171 aa).

This sequence belongs to the RNA polymerase beta chain family. In terms of assembly, the RNAP catalytic core consists of 2 alpha, 1 beta, 1 beta' and 1 omega subunit. When a sigma factor is associated with the core the holoenzyme is formed, which can initiate transcription.

It catalyses the reaction RNA(n) + a ribonucleoside 5'-triphosphate = RNA(n+1) + diphosphate. In terms of biological role, DNA-dependent RNA polymerase catalyzes the transcription of DNA into RNA using the four ribonucleoside triphosphates as substrates. In Corynebacterium efficiens (strain DSM 44549 / YS-314 / AJ 12310 / JCM 11189 / NBRC 100395), this protein is DNA-directed RNA polymerase subunit beta.